The sequence spans 598 residues: MKNIRNFSIIAHIDHGKSTLSDRLINTCGGLSDREMESQVLDSMDIERERGITIKAQSVTLDYHAKDGETYQLNFIDTPGHVDFAYEVSRSLAACEGALLVVDAGQGVEAQTLANCYTAMEMNLEVVPILNKIDLPAADPDRVAKEIEDIIGIDAADAVRCSAKTGVGIDLVLEEIVRCIPPPVGDLTGPLQALIIDSWFDNYQGVVSLVRVMHGQIKVGDRMKVMSTGQVNPVAKVGYFTPKQKETGILKAGEVGYVIAGIKDILGAPVGDTLTISGHEAAKALPGFKRAKPQVYAGLFPVSSDDYENFRDALAKLSINDASLFYEPENSSALGFGFRCGFLGLLHMEIVQERLEREYDLNLITTAPTVVYEVETTRGEVLHIDSPAKFPAMNDIEEIREPIAECNILVPQEYLGNVITLCVQKRGMQTKMVYHGKQVALTYHIPMGEVVMDFFDRLKSTSRGYASLEYNFVKFEAADMVRVDVLINSERVDALALITHRANSESYGRDLVDKMKDLIPRQMFNIALQAAIGSKIIARSTVKQLTKNVLAKCYGGDISRKKKLLKKQKEGKKRMKSVGNVDIPQEAFLAVLHIGKDK.

One can recognise a tr-type G domain in the interval 2-184 (KNIRNFSIIA…EIVRCIPPPV (183 aa)). Residues 14 to 19 (DHGKST) and 131 to 134 (NKID) contribute to the GTP site.

This sequence belongs to the TRAFAC class translation factor GTPase superfamily. Classic translation factor GTPase family. LepA subfamily.

It is found in the cell inner membrane. The catalysed reaction is GTP + H2O = GDP + phosphate + H(+). Required for accurate and efficient protein synthesis under certain stress conditions. May act as a fidelity factor of the translation reaction, by catalyzing a one-codon backward translocation of tRNAs on improperly translocated ribosomes. Back-translocation proceeds from a post-translocation (POST) complex to a pre-translocation (PRE) complex, thus giving elongation factor G a second chance to translocate the tRNAs correctly. Binds to ribosomes in a GTP-dependent manner. In Psychromonas ingrahamii (strain DSM 17664 / CCUG 51855 / 37), this protein is Elongation factor 4.